We begin with the raw amino-acid sequence, 303 residues long: ATP synthase gamma chain (303 aa).

It belongs to the ATPase gamma chain family. In terms of assembly, F-type ATPases have 2 components, CF(1) - the catalytic core - and CF(0) - the membrane proton channel. CF(1) has five subunits: alpha(3), beta(3), gamma(1), delta(1), epsilon(1). CF(0) has three main subunits: a, b and c.

The protein localises to the cell inner membrane. Produces ATP from ADP in the presence of a proton gradient across the membrane. The gamma chain is believed to be important in regulating ATPase activity and the flow of protons through the CF(0) complex. The chain is ATP synthase gamma chain from Bartonella henselae (strain ATCC 49882 / DSM 28221 / CCUG 30454 / Houston 1) (Rochalimaea henselae).